A 661-amino-acid polypeptide reads, in one-letter code: Probable potassium transport system protein Kup 1 (661 aa).

The segment covering 1–11 has biased composition (gly residues); sequence MKGLFPAGGGN. The disordered stretch occupies residues 1–38; it reads MKGLFPAGGGNPPSSYLSRFLPHRKERSPENVTSGRNG. 12 helical membrane-spanning segments follow: residues 48–68, 85–105, 139–159, 177–197, 207–227, 251–271, 286–306, 324–344, 384–404, 405–425, 436–456, and 458–478; these read LALGALGIVYGDIGTSPLYTI, IMGVLSLILWSLTMVVSIKYI, AVVVMAALTGAALLYGDGFIT, AAKNLIVPLACGILLGLFLVQ, IFGPVMLVWFATIATLGLLCI, VHGLVVLGSVVLSITGGEALY, WFAMVFPSLLLNYFGQGAALL, LLLPMVALATMASIIASQAMI, LMMVVCIGLVLVFRASSGLAG, AYGVAVTANMAITSVVYFFVA, TAPLVGLFLVFDITYFGSNLL, and FFDGGWFPLAVALVIVIVMAS.

The protein belongs to the HAK/KUP transporter (TC 2.A.72) family.

Its subcellular location is the cell inner membrane. It catalyses the reaction K(+)(in) + H(+)(in) = K(+)(out) + H(+)(out). Transport of potassium into the cell. Likely operates as a K(+):H(+) symporter. This Syntrophobacter fumaroxidans (strain DSM 10017 / MPOB) protein is Probable potassium transport system protein Kup 1.